Here is a 436-residue protein sequence, read N- to C-terminus: UDP-N-acetylmuramate--L-alanine ligase (436 aa).

Residue 108–114 coordinates ATP; sequence GAHGKTS.

The protein belongs to the MurCDEF family.

The protein localises to the cytoplasm. The enzyme catalyses UDP-N-acetyl-alpha-D-muramate + L-alanine + ATP = UDP-N-acetyl-alpha-D-muramoyl-L-alanine + ADP + phosphate + H(+). It functions in the pathway cell wall biogenesis; peptidoglycan biosynthesis. Functionally, cell wall formation. This Bacillus cereus (strain G9842) protein is UDP-N-acetylmuramate--L-alanine ligase.